Here is a 319-residue protein sequence, read N- to C-terminus: 2,3,4,5-tetrahydropyridine-2,6-dicarboxylate N-succinyltransferase (319 aa).

Mg(2+) contacts are provided by D167 and E184. Residue E200 is the Acyl-anhydride intermediate of the active site. Residues R202, G217, S220, A243, 258–259 (EA), and K278 contribute to the succinyl-CoA site.

The protein belongs to the type 2 tetrahydrodipicolinate N-succinyltransferase family. In terms of assembly, homotrimer.

It localises to the cytoplasm. The catalysed reaction is (S)-2,3,4,5-tetrahydrodipicolinate + succinyl-CoA + H2O = (S)-2-succinylamino-6-oxoheptanedioate + CoA. The protein operates within amino-acid biosynthesis; L-lysine biosynthesis via DAP pathway; LL-2,6-diaminopimelate from (S)-tetrahydrodipicolinate (succinylase route): step 1/3. Catalyzes the conversion of the cyclic tetrahydrodipicolinate (THDP) into the acyclic N-succinyl-L-2-amino-6-oxopimelate using succinyl-CoA. The polypeptide is 2,3,4,5-tetrahydropyridine-2,6-dicarboxylate N-succinyltransferase (Salinispora tropica (strain ATCC BAA-916 / DSM 44818 / JCM 13857 / NBRC 105044 / CNB-440)).